Consider the following 640-residue polypeptide: Replication protein A 70 kDa DNA-binding subunit A (640 aa).

Positions alanine 211–phenylalanine 293 form a DNA-binding region, OB. A C4-type zinc finger spans residues cysteine 503 to cysteine 529.

This sequence belongs to the replication factor A protein 1 family. In terms of assembly, heterotrimer of RPA1, RPA2 and RPA3 (canonical replication protein A complex). Interacts with RPA2A. As to expression, expressed in roots, leaves, stalks and flower buds.

It localises to the nucleus. In terms of biological role, component of the replication protein A complex (RPA) required for DNA recombination, repair and replication. The activity of RPA is mediated by single-stranded DNA binding and protein interactions. Plays an essential role at later stages of meiotic recombination events required for the formation of class I crossovers. Is essential for normal progression through meiosis in pollen mother cells. Is involved in repair of double-strand DNA breaks (DSBs) induced by genotoxic stresses, but does not seem to be required for the repair of meiotic DSBs. In Arabidopsis thaliana (Mouse-ear cress), this protein is Replication protein A 70 kDa DNA-binding subunit A (RPA1A).